A 660-amino-acid chain; its full sequence is UvrABC system protein B (660 aa).

The Helicase ATP-binding domain maps to 27–414; that stretch reads NGVNEGKRHQ…TDEMVQQIIR (388 aa). 40–47 serves as a coordination point for ATP; that stretch reads GATGTGKT. The Beta-hairpin signature appears at 93–116; sequence YYDYYQPEAYVPSTDTFIEKDASI. The region spanning 431 to 593 is the Helicase C-terminal domain; the sequence is QIDDLLGEIQ…ITPTTINKKI (163 aa). Residues 603–622 form a disordered region; it reads NDETNEQQQTEVPKKMTKKE. The UVR domain occupies 624 to 659; sequence EKTIANIEKEMKQAAKDLDFEKATELRDMLFELKAE.

The protein belongs to the UvrB family. Forms a heterotetramer with UvrA during the search for lesions. Interacts with UvrC in an incision complex.

Its subcellular location is the cytoplasm. The UvrABC repair system catalyzes the recognition and processing of DNA lesions. A damage recognition complex composed of 2 UvrA and 2 UvrB subunits scans DNA for abnormalities. Upon binding of the UvrA(2)B(2) complex to a putative damaged site, the DNA wraps around one UvrB monomer. DNA wrap is dependent on ATP binding by UvrB and probably causes local melting of the DNA helix, facilitating insertion of UvrB beta-hairpin between the DNA strands. Then UvrB probes one DNA strand for the presence of a lesion. If a lesion is found the UvrA subunits dissociate and the UvrB-DNA preincision complex is formed. This complex is subsequently bound by UvrC and the second UvrB is released. If no lesion is found, the DNA wraps around the other UvrB subunit that will check the other stand for damage. In Staphylococcus saprophyticus subsp. saprophyticus (strain ATCC 15305 / DSM 20229 / NCIMB 8711 / NCTC 7292 / S-41), this protein is UvrABC system protein B.